A 687-amino-acid chain; its full sequence is Putative lipase YDR444W (687 aa).

Catalysis depends on serine 284, which acts as the Charge relay system. Disordered regions lie at residues 429 to 472, 491 to 513, and 650 to 687; these read IRKK…AESP, KINK…EQGV, and ELAE…ENAT. Residues 436 to 463 show a composition bias toward low complexity; it reads SPTSSEFVSSDSPESSGASSPSNENGNN. Residues 670-681 are compositionally biased toward basic and acidic residues; that stretch reads RSNEYNEGEISK.

Belongs to the putative lipase ROG1 family.

Its subcellular location is the cytoplasm. This Saccharomyces cerevisiae (strain ATCC 204508 / S288c) (Baker's yeast) protein is Putative lipase YDR444W.